The following is a 273-amino-acid chain: Putative pyruvate, phosphate dikinase regulatory protein (273 aa).

153 to 160 (GISRTSKT) contacts ADP.

The protein belongs to the pyruvate, phosphate/water dikinase regulatory protein family. PDRP subfamily.

The catalysed reaction is N(tele)-phospho-L-histidyl/L-threonyl-[pyruvate, phosphate dikinase] + ADP = N(tele)-phospho-L-histidyl/O-phospho-L-threonyl-[pyruvate, phosphate dikinase] + AMP + H(+). The enzyme catalyses N(tele)-phospho-L-histidyl/O-phospho-L-threonyl-[pyruvate, phosphate dikinase] + phosphate + H(+) = N(tele)-phospho-L-histidyl/L-threonyl-[pyruvate, phosphate dikinase] + diphosphate. Functionally, bifunctional serine/threonine kinase and phosphorylase involved in the regulation of the pyruvate, phosphate dikinase (PPDK) by catalyzing its phosphorylation/dephosphorylation. The polypeptide is Putative pyruvate, phosphate dikinase regulatory protein (Rhizobium etli (strain ATCC 51251 / DSM 11541 / JCM 21823 / NBRC 15573 / CFN 42)).